The sequence spans 133 residues: MGKKTFREWQYFKLSITSFDQDVDDAHAIDQMTWRQWLNNALKRSYGIFGEGVEYSFLHVDDKLAYIRVNHADKDTFSSSISTYISTDELVGSPLTVSILQESSSLRLLEVTDDDRLWLKKVMEEEEQDCKCI.

As to quaternary structure, component of nuclear RNase P and RNase MRP complexes. RNase P consists of an RNA moiety and at least 9 protein subunits including POP1, POP3, POP4, POP5, POP6, POP7, POP8, RPP1 and RPR2. RNase MRP complex consists of an RNA moiety and at least 10 protein subunits including POP1, POP3, POP4, POP5, POP6, POP7, POP8, RMP1, RPP1 and SNM1, many of which are shared with the RNase P complex.

The protein localises to the nucleus. It carries out the reaction Endonucleolytic cleavage of RNA, removing 5'-extranucleotides from tRNA precursor.. Component of ribonuclease P, a protein complex that generates mature tRNA molecules by cleaving their 5'-ends. Also a component of RNase MRP, which cleaves pre-rRNA sequences. The sequence is that of Ribonucleases P/MRP protein subunit POP8 (POP8) from Saccharomyces cerevisiae (strain ATCC 204508 / S288c) (Baker's yeast).